Reading from the N-terminus, the 388-residue chain is Phosphopentomutase (388 aa).

Positions 11, 283, 288, 324, 325, and 336 each coordinate Mn(2+).

This sequence belongs to the phosphopentomutase family. The cofactor is Mn(2+).

The protein localises to the cytoplasm. It carries out the reaction 2-deoxy-alpha-D-ribose 1-phosphate = 2-deoxy-D-ribose 5-phosphate. The catalysed reaction is alpha-D-ribose 1-phosphate = D-ribose 5-phosphate. Its pathway is carbohydrate degradation; 2-deoxy-D-ribose 1-phosphate degradation; D-glyceraldehyde 3-phosphate and acetaldehyde from 2-deoxy-alpha-D-ribose 1-phosphate: step 1/2. Functionally, isomerase that catalyzes the conversion of deoxy-ribose 1-phosphate (dRib-1-P) and ribose 1-phosphate (Rib-1-P) to deoxy-ribose 5-phosphate (dRib-5-P) and ribose 5-phosphate (Rib-5-P), respectively. The sequence is that of Phosphopentomutase from Anaeromyxobacter sp. (strain K).